The following is a 205-amino-acid chain: Type-4 uracil-DNA glycosylase (205 aa).

The [4Fe-4S] cluster site is built by Cys13 and Cys16. Residues Gly40–Gly42, Phe54, and Asn80 contribute to the uracil site. Positions 84 and 100 each coordinate [4Fe-4S] cluster. Residue His155 coordinates uracil.

This sequence belongs to the uracil-DNA glycosylase (UDG) superfamily. Type 4 (UDGa) family. As to quaternary structure, monomer.

The enzyme catalyses Hydrolyzes single-stranded DNA or mismatched double-stranded DNA and polynucleotides, releasing free uracil.. Its activity is regulated as follows. Product-inhibited by apurinic/apyrimidinic sites. Its function is as follows. Removes uracil bases that are present in DNA as a result of either deamination of cytosine or misincorporation of dUMP instead of dTMP. Can remove uracil from double-stranded DNA containing either a U/G, U/A, U/C or U/T base pair as well as from single-stranded DNA. Specifically recognizes uracil that is flipped out from double-stranded DNA. In Thermus thermophilus (strain ATCC 27634 / DSM 579 / HB8), this protein is Type-4 uracil-DNA glycosylase.